The primary structure comprises 197 residues: Probable nicotinate-nucleotide adenylyltransferase (197 aa).

Belongs to the NadD family.

It catalyses the reaction nicotinate beta-D-ribonucleotide + ATP + H(+) = deamido-NAD(+) + diphosphate. The protein operates within cofactor biosynthesis; NAD(+) biosynthesis; deamido-NAD(+) from nicotinate D-ribonucleotide: step 1/1. Functionally, catalyzes the reversible adenylation of nicotinate mononucleotide (NaMN) to nicotinic acid adenine dinucleotide (NaAD). This chain is Probable nicotinate-nucleotide adenylyltransferase, found in Neisseria meningitidis serogroup C (strain 053442).